The chain runs to 194 residues: Thymidine kinase (194 aa).

ATP is bound by residues Gly-15–Ser-22 and Asp-88–Gln-91. The active-site Proton acceptor is Glu-89. Zn(2+)-binding residues include Cys-145, Cys-148, Cys-183, and His-186.

This sequence belongs to the thymidine kinase family. Homotetramer.

It is found in the cytoplasm. It carries out the reaction thymidine + ATP = dTMP + ADP + H(+). The sequence is that of Thymidine kinase from Bacillus velezensis (strain DSM 23117 / BGSC 10A6 / LMG 26770 / FZB42) (Bacillus amyloliquefaciens subsp. plantarum).